The chain runs to 176 residues: MARYEDLPYRTCVGMMLLNAEGLVFIGRRSGGIEHVDDSHVWQMPQGGVDPGEDTWAAAKRELYEETSVQSVEKLGEISDWLIYDIPRTVAGRAWKGRYRGQRQKWYAVRFTGLDSEIDVTTPGGGHKAEFISWRWEPMQNLPNLIVPFKRPVYERVVKEFSALGFPEPKASVGHR.

Positions 8 to 159 (PYRTCVGMML…KRPVYERVVK (152 aa)) constitute a Nudix hydrolase domain. The Nudix box motif lies at 47–68 (GGVDPGEDTWAAAKRELYEETS).

This sequence belongs to the Nudix hydrolase family. RppH subfamily. The cofactor is a divalent metal cation.

Functionally, accelerates the degradation of transcripts by removing pyrophosphate from the 5'-end of triphosphorylated RNA, leading to a more labile monophosphorylated state that can stimulate subsequent ribonuclease cleavage. The polypeptide is RNA pyrophosphohydrolase (Rhodopseudomonas palustris (strain BisA53)).